We begin with the raw amino-acid sequence, 23 residues long: Coenzyme PQQ synthesis protein A (23 aa).

The pyrroloquinoline quinone (Glu-Tyr) cross-link spans 15–19; sequence EVTMY.

This sequence belongs to the PqqA family.

It functions in the pathway cofactor biosynthesis; pyrroloquinoline quinone biosynthesis. In terms of biological role, required for coenzyme pyrroloquinoline quinone (PQQ) biosynthesis. PQQ is probably formed by cross-linking a specific glutamate to a specific tyrosine residue and excising these residues from the peptide. This Pseudomonas putida (strain W619) protein is Coenzyme PQQ synthesis protein A.